Here is a 445-residue protein sequence, read N- to C-terminus: Argininosuccinate synthase (445 aa).

ATP contacts are provided by residues 17 to 25 (AFSGGLDTS) and A43. Y99 contacts L-citrulline. Positions 129 and 131 each coordinate ATP. Residues T131, N135, and D136 each coordinate L-aspartate. N135 serves as a coordination point for L-citrulline. An ATP-binding site is contributed by D136. L-citrulline contacts are provided by R139 and S192. ATP is bound at residue D194. The L-citrulline site is built by T201, E203, and E280.

This sequence belongs to the argininosuccinate synthase family. Type 2 subfamily. In terms of assembly, homotetramer.

The protein resides in the cytoplasm. It carries out the reaction L-citrulline + L-aspartate + ATP = 2-(N(omega)-L-arginino)succinate + AMP + diphosphate + H(+). Its pathway is amino-acid biosynthesis; L-arginine biosynthesis; L-arginine from L-ornithine and carbamoyl phosphate: step 2/3. The protein is Argininosuccinate synthase of Bordetella petrii (strain ATCC BAA-461 / DSM 12804 / CCUG 43448).